The sequence spans 199 residues: ATP synthase subunit a (199 aa).

A run of 6 helical transmembrane segments spans residues T2–F22, S25–T45, V53–Y73, M80–I100, V143–L163, and G164–I184.

The protein belongs to the ATPase A chain family. In terms of assembly, F-type ATPases have 2 components, CF(1) - the catalytic core - and CF(0) - the membrane proton channel. CF(1) has five subunits: alpha(3), beta(3), gamma(1), delta(1), epsilon(1). CF(0) has three main subunits: a, b and c.

It localises to the mitochondrion inner membrane. Mitochondrial membrane ATP synthase (F(1)F(0) ATP synthase or Complex V) produces ATP from ADP in the presence of a proton gradient across the membrane which is generated by electron transport complexes of the respiratory chain. F-type ATPases consist of two structural domains, F(1) - containing the extramembraneous catalytic core and F(0) - containing the membrane proton channel, linked together by a central stalk and a peripheral stalk. During catalysis, ATP synthesis in the catalytic domain of F(1) is coupled via a rotary mechanism of the central stalk subunits to proton translocation. Key component of the proton channel; it may play a direct role in the translocation of protons across the membrane. This chain is ATP synthase subunit a (ATP6), found in Ascaris suum (Pig roundworm).